Consider the following 400-residue polypeptide: Multidrug resistance protein 2 (400 aa).

The next 11 membrane-spanning stretches (helical) occupy residues 11–31 (IFII…LIIP), 46–66 (TMGY…PFAG), 78–98 (IILG…GTHV), 106–126 (ILGG…VADI), 142–162 (AIST…GFGI), 164–184 (MPFF…VFIL), 213–233 (IHPV…GLSA), 253–273 (IAAI…LLFG), 297–317 (FVST…FIFL), 346–366 (STYT…LFDL), and 368–388 (IHYP…LTMV).

This sequence belongs to the major facilitator superfamily. TCR/Tet family.

The protein localises to the cell membrane. Functionally, energy-dependent efflux pump responsible for decreased drug accumulation in multi-drug-resistant cells. Probably uses a transmembrane proton gradient as the energy source. Causes the efflux of a variety of toxic substances, including such structurally diverse compounds as ethidium bromide, rhodamine and acridine dyes, tetraphenylphosphonium, puromycin, chloramphenicol, doxorubicin, and fluoroquinolone antibiotics. The polypeptide is Multidrug resistance protein 2 (blt) (Bacillus subtilis (strain 168)).